A 1191-amino-acid chain; its full sequence is Pre-mRNA-processing ATP-dependent RNA helicase PRP5 (1191 aa).

A disordered region spans residues 1–436 (MARPRDSRSP…SQPEPATQME (436 aa)). 3 stretches are compositionally biased toward basic and acidic residues: residues 22-38 (FRNDDRRDRDRRNDGRD), 46-144 (RSPD…REGT), and 185-212 (DVDKKAERLAKLEAWKKKKESASQKQKE). Residues 236 to 253 (TVSPSVSAIASPAATPTV) are compositionally biased toward low complexity. The span at 326-338 (AETEKLTAKRKLD) shows a compositional bias: basic and acidic residues. Positions 358–384 (EADDTPYADQDDDESDGDNFAENEEEA) are enriched in acidic residues. The segment covering 422–431 (MNNNASQPEP) has biased composition (polar residues). The short motif at 561 to 589 (QKWAQCGLTRQTLDVVDNLGYEKPTPIQM) is the Q motif element. In terms of domain architecture, Helicase ATP-binding spans 592-770 (LPALMSGRDV…KKVLKNPIEV (179 aa)). An ATP-binding site is contributed by 605-612 (AKTGSGKT). Positions 718-721 (DEAD) match the DEAD box motif. Residues 801 to 945 (LLGELYDRDE…PIPDRLNEMR (145 aa)) form the Helicase C-terminal domain. Disordered regions lie at residues 946 to 1008 (KAHR…EKAE) and 1025 to 1051 (ESAKADDADAKSMPPVKTSGVVKDKAK). A compositionally biased stretch (basic and acidic residues) spans 967–980 (GLDRLDQEREAARL). The stretch at 969-1018 (DRLDQEREAARLRERKVHKAEGEEEEVTEDKKEDEDEKAEKALDAIRAAA) forms a coiled coil. Over residues 990 to 1005 (GEEEEVTEDKKEDEDE) the composition is skewed to acidic residues. Positions 1025–1034 (ESAKADDADA) are enriched in basic and acidic residues.

It belongs to the DEAD box helicase family. DDX46/PRP5 subfamily.

It is found in the nucleus. The catalysed reaction is ATP + H2O = ADP + phosphate + H(+). ATP-dependent RNA helicase involved spliceosome assembly and in nuclear splicing. Catalyzes an ATP-dependent conformational change of U2 snRNP. Bridges U1 and U2 snRNPs and enables stable U2 snRNP association with intron RNA. This chain is Pre-mRNA-processing ATP-dependent RNA helicase PRP5 (PRP5), found in Gibberella zeae (strain ATCC MYA-4620 / CBS 123657 / FGSC 9075 / NRRL 31084 / PH-1) (Wheat head blight fungus).